The following is a 174-amino-acid chain: MGQSQSQIFEDLISNSSFSNEEIERIRKRFIKIDANQSGSIDRNEFLSIPSVASNPLASRLFSVVDEDGGGDVDFQEFINSLSVFSVHGNKEEKLKFAFKIYDIDRDGYISNGELYLVLKMMVGTNLREDQLQQIVDKTIMEVDKDRDGKISFEEFKDIVSGSNVTSSMTLDSF.

EF-hand domains lie at 21–56 (EEIE…ASNP), 60–88 (RLFS…FSVH), 90–125 (NKEE…MVGT), and 131–166 (QLQQ…SNVT). Ca(2+) contacts are provided by Asp34, Asn36, Ser38, Ser40, Glu45, Asp66, Asp68, Asp72, Glu77, Asp103, Asp105, Asp107, Tyr109, Glu114, Asp144, Asp146, Asp148, Lys150, and Glu155.

Belongs to the calcineurin regulatory subunit family. As to quaternary structure, composed of a catalytic subunit (A) and a regulatory subunit (B).

In terms of biological role, regulatory subunit of calcineurin, a calcium-dependent, calmodulin stimulated protein phosphatase. Confers calcium sensitivity. The polypeptide is Calcineurin subunit B (cnb1) (Schizosaccharomyces pombe (strain 972 / ATCC 24843) (Fission yeast)).